We begin with the raw amino-acid sequence, 197 residues long: Imidazoleglycerol-phosphate dehydratase (197 aa).

The protein belongs to the imidazoleglycerol-phosphate dehydratase family.

Its subcellular location is the cytoplasm. It carries out the reaction D-erythro-1-(imidazol-4-yl)glycerol 3-phosphate = 3-(imidazol-4-yl)-2-oxopropyl phosphate + H2O. It participates in amino-acid biosynthesis; L-histidine biosynthesis; L-histidine from 5-phospho-alpha-D-ribose 1-diphosphate: step 6/9. This is Imidazoleglycerol-phosphate dehydratase from Laribacter hongkongensis (strain HLHK9).